The chain runs to 308 residues: HPr kinase/phosphorylase (308 aa).

Residues His-141 and Lys-162 contribute to the active site. 156 to 163 lines the ATP pocket; that stretch reads GKSGVGKS. Ser-163 provides a ligand contact to Mg(2+). The Proton acceptor; for phosphorylation activity. Proton donor; for dephosphorylation activity role is filled by Asp-180. Residues 204-213 form an important for the catalytic mechanism of both phosphorylation and dephosphorylation region; that stretch reads MEIRGVGILD. A Mg(2+)-binding site is contributed by Glu-205. The active site involves Arg-246. The segment at 267 to 272 is important for the catalytic mechanism of dephosphorylation; it reads PVKPGR.

It belongs to the HPrK/P family. As to quaternary structure, homohexamer. Requires Mg(2+) as cofactor.

The enzyme catalyses [HPr protein]-L-serine + ATP = [HPr protein]-O-phospho-L-serine + ADP + H(+). It carries out the reaction [HPr protein]-O-phospho-L-serine + phosphate + H(+) = [HPr protein]-L-serine + diphosphate. Functionally, catalyzes the ATP- as well as the pyrophosphate-dependent phosphorylation of a specific serine residue in HPr, a phosphocarrier protein of the phosphoenolpyruvate-dependent sugar phosphotransferase system (PTS). HprK/P also catalyzes the pyrophosphate-producing, inorganic phosphate-dependent dephosphorylation (phosphorolysis) of seryl-phosphorylated HPr (P-Ser-HPr). The two antagonistic activities of HprK/P are regulated by several intracellular metabolites, which change their concentration in response to the absence or presence of rapidly metabolisable carbon sources (glucose, fructose, etc.) in the growth medium. Therefore, by controlling the phosphorylation state of HPr, HPrK/P is a sensor enzyme that plays a major role in the regulation of carbon metabolism and sugar transport: it mediates carbon catabolite repression (CCR), and regulates PTS-catalyzed carbohydrate uptake and inducer exclusion. The polypeptide is HPr kinase/phosphorylase (Peptoclostridium acidaminophilum (Eubacterium acidaminophilum)).